Here is a 1237-residue protein sequence, read N- to C-terminus: Glutamate receptor ionotropic, NMDA 2C (1237 aa).

The signal sequence occupies residues 1-19 (MGGALGPALLLTSLLGAWA). Over 20 to 554 (RLGAGQGEQA…SAFLEPYSPA (535 aa)) the chain is Extracellular. Asparagine 70 and asparagine 73 each carry an N-linked (GlcNAc...) asparagine glycan. Cysteine 82 and cysteine 317 are oxidised to a cystine. Asparagine 337 and asparagine 438 each carry an N-linked (GlcNAc...) asparagine glycan. Cystine bridges form between cysteine 426-cysteine 453 and cysteine 433-cysteine 454. 3 residues coordinate L-glutamate: serine 509, threonine 511, and arginine 516. Residue asparagine 539 is glycosylated (N-linked (GlcNAc...) asparagine). A helical membrane pass occupies residues 555–575 (VWVMMFVMCLTVVAITVFMFE). At 576–601 (YFSPVSYNQNLTKGKKPGGPSFTIGK) the chain is on the cytoplasmic side. A pore-forming region spans residues 601–620 (KSVWLLWALVFNNSVPIENP). Residues 602 to 611 (SVWLLWALVF) constitute an intramembrane region (discontinuously helical). The Cytoplasmic segment spans residues 612–622 (NNSVPIENPRG). The helical transmembrane segment at 623 to 644 (TTSKIMVLVWAFFAVIFLASYT) threads the bilayer. At 645 to 813 (ANLAAFMIQE…EVMSSKLDID (169 aa)) the chain is on the extracellular side. Asparagine 685 is a glycosylation site (N-linked (GlcNAc...) asparagine). L-glutamate-binding residues include serine 687, threonine 688, and aspartate 729. An intrachain disulfide couples cysteine 743 to cysteine 798. The chain crosses the membrane as a helical span at residues 814–833 (NMAGVFYMLLVAMGLALLVF). The Cytoplasmic segment spans residues 834-1237 (AWEHLVYWKL…RRVSSLESEV (404 aa)). Serine 875, serine 881, and serine 912 each carry phosphoserine. Polar residues predominate over residues 907–925 (ADVSSSLDRATRTIENWGN). The interval 907–990 (ADVSSSLDRA…LPDVSRPSCR (84 aa)) is disordered. Residues 930–941 (PAPTASGPRSST) show a composition bias toward low complexity. Over residues 968-982 (PQPPARPATCGPPLP) the composition is skewed to pro residues. The PDZ-binding signature appears at 1235–1237 (SEV).

This sequence belongs to the glutamate-gated ion channel (TC 1.A.10.1) family. NR2C/GRIN2C subfamily. In terms of assembly, heterotetramer. Forms heterotetrameric channels composed of two GluN1/zeta subunits (GRIN1), and two identical GluN2/epsilon subunits (GRIN2A, GRIN2B, GRIN2C or GRIN2D) or GluN3 subunits (GRIN3A or GRIN3B) (in vitro). In vivo, the subunit composition may depend on the expression levels of the different subunits. Interacts with PDZ domains of PATJ and DLG4. Interacts (via PDZ-binding motif) with SNX27 (via PDZ domain); the interaction is required for recycling to the plasma membrane when endocytosed and prevent degradation in lysosomes. In terms of tissue distribution, detected in cerebellum.

It is found in the cell membrane. Its subcellular location is the postsynaptic cell membrane. The enzyme catalyses Ca(2+)(in) = Ca(2+)(out). It carries out the reaction Na(+)(in) = Na(+)(out). It catalyses the reaction K(+)(in) = K(+)(out). Functionally, component of N-methyl-D-aspartate (NMDA) receptors (NMDARs) that function as heterotetrameric, ligand-gated cation channels with high calcium permeability and voltage-dependent block by Mg(2+). Participates in synaptic plasticity for learning and memory formation by contributing to the slow phase of excitatory postsynaptic current and long-term synaptic potentiation. Channel activation requires binding of the neurotransmitter L-glutamate to the GluN2 subunit, glycine or D-serine binding to the GluN1 subunit, plus membrane depolarization to eliminate channel inhibition by Mg(2+). NMDARs mediate simultaneously the potasium efflux and the influx of calcium and sodium. Each GluN2 subunit confers differential attributes to channel properties, including activation, deactivation and desensitization kinetics, pH sensitivity, Ca2(+) permeability, and binding to allosteric modulators. This Rattus norvegicus (Rat) protein is Glutamate receptor ionotropic, NMDA 2C.